Here is a 122-residue protein sequence, read N- to C-terminus: Large ribosomal subunit protein uL14 (122 aa).

This sequence belongs to the universal ribosomal protein uL14 family. In terms of assembly, part of the 50S ribosomal subunit. Forms a cluster with proteins L3 and L19. In the 70S ribosome, L14 and L19 interact and together make contacts with the 16S rRNA in bridges B5 and B8.

Functionally, binds to 23S rRNA. Forms part of two intersubunit bridges in the 70S ribosome. In Flavobacterium johnsoniae (strain ATCC 17061 / DSM 2064 / JCM 8514 / BCRC 14874 / CCUG 350202 / NBRC 14942 / NCIMB 11054 / UW101) (Cytophaga johnsonae), this protein is Large ribosomal subunit protein uL14.